Consider the following 97-residue polypeptide: Type VII secretion system extracellular protein A (97 aa).

Residues 61 to 93 are a coiled coil; sequence KVEKFAQLLEEIKQQLNSTADAVQEQDQQLSNN.

This sequence belongs to the WXG100 family. sagEsxA-like subfamily. Forms both homodimers and heterodimers with EsxC.

Its subcellular location is the secreted. Its function is as follows. Virulence factor that is important for the establishment of infection in the host. EsxA is required for EsxB synthesis as well as secretion. Modulates host cell apoptotic pathways and mediates together with EsxB the release of S.aureus from the host cell. By acting on apoptosis, plays a role in the modulation of dendritic cell-mediated immunity. The chain is Type VII secretion system extracellular protein A from Staphylococcus aureus (strain USA300).